Consider the following 340-residue polypeptide: Ribosomal RNA large subunit methyltransferase F (340 aa).

Residues 1–36 (MNAPRTPKPARKKPDSATPAKPVEPRKEASLHPRNR) are disordered.

The protein belongs to the methyltransferase superfamily. METTL16/RlmF family.

The protein localises to the cytoplasm. It carries out the reaction adenosine(1618) in 23S rRNA + S-adenosyl-L-methionine = N(6)-methyladenosine(1618) in 23S rRNA + S-adenosyl-L-homocysteine + H(+). Its function is as follows. Specifically methylates the adenine in position 1618 of 23S rRNA. This chain is Ribosomal RNA large subunit methyltransferase F, found in Pseudomonas fluorescens (strain Pf0-1).